Here is a 102-residue protein sequence, read N- to C-terminus: Large ribosomal subunit protein uL24 (102 aa).

This sequence belongs to the universal ribosomal protein uL24 family. In terms of assembly, part of the 50S ribosomal subunit.

In terms of biological role, one of two assembly initiator proteins, it binds directly to the 5'-end of the 23S rRNA, where it nucleates assembly of the 50S subunit. Its function is as follows. One of the proteins that surrounds the polypeptide exit tunnel on the outside of the subunit. In Alcanivorax borkumensis (strain ATCC 700651 / DSM 11573 / NCIMB 13689 / SK2), this protein is Large ribosomal subunit protein uL24.